Consider the following 143-residue polypeptide: 6,7-dimethyl-8-ribityllumazine synthase (143 aa).

5-amino-6-(D-ribitylamino)uracil is bound by residues phenylalanine 13, 45–47 (TFD), and 69–71 (CVI). 74 to 75 (ET) is a (2S)-2-hydroxy-3-oxobutyl phosphate binding site. The Proton donor role is filled by histidine 77. Leucine 102 provides a ligand contact to 5-amino-6-(D-ribitylamino)uracil. Arginine 117 lines the (2S)-2-hydroxy-3-oxobutyl phosphate pocket.

It belongs to the DMRL synthase family.

It carries out the reaction (2S)-2-hydroxy-3-oxobutyl phosphate + 5-amino-6-(D-ribitylamino)uracil = 6,7-dimethyl-8-(1-D-ribityl)lumazine + phosphate + 2 H2O + H(+). It participates in cofactor biosynthesis; riboflavin biosynthesis; riboflavin from 2-hydroxy-3-oxobutyl phosphate and 5-amino-6-(D-ribitylamino)uracil: step 1/2. Catalyzes the formation of 6,7-dimethyl-8-ribityllumazine by condensation of 5-amino-6-(D-ribitylamino)uracil with 3,4-dihydroxy-2-butanone 4-phosphate. This is the penultimate step in the biosynthesis of riboflavin. The protein is 6,7-dimethyl-8-ribityllumazine synthase of Archaeoglobus fulgidus (strain ATCC 49558 / DSM 4304 / JCM 9628 / NBRC 100126 / VC-16).